The primary structure comprises 160 residues: D-aminoacyl-tRNA deacylase (160 aa).

The Gly-cisPro motif, important for rejection of L-amino acids motif lies at 146–147 (GP).

It belongs to the DTD family. Homodimer.

Its subcellular location is the cytoplasm. It catalyses the reaction glycyl-tRNA(Ala) + H2O = tRNA(Ala) + glycine + H(+). The enzyme catalyses a D-aminoacyl-tRNA + H2O = a tRNA + a D-alpha-amino acid + H(+). Functionally, an aminoacyl-tRNA editing enzyme that deacylates mischarged D-aminoacyl-tRNAs. Also deacylates mischarged glycyl-tRNA(Ala), protecting cells against glycine mischarging by AlaRS. Acts via tRNA-based rather than protein-based catalysis; rejects L-amino acids rather than detecting D-amino acids in the active site. By recycling D-aminoacyl-tRNA to D-amino acids and free tRNA molecules, this enzyme counteracts the toxicity associated with the formation of D-aminoacyl-tRNA entities in vivo and helps enforce protein L-homochirality. This Desulfovibrio desulfuricans (strain ATCC 27774 / DSM 6949 / MB) protein is D-aminoacyl-tRNA deacylase.